Here is a 135-residue protein sequence, read N- to C-terminus: MLRIYVDAATKGNPGESGGGIVYLTDQSRQQLHVPLGIVSNHEAEFKVLIEALKKAIANEDNQQTVLLHSDSKIVVQTIEKNYAKNEKYQPYLAEYQQLEKNFPLLLIEWLPESQNKAADMLARQALQKFYPNKK.

Positions 1–128 (MLRIYVDAAT…ADMLARQALQ (128 aa)) constitute an RNase H type-1 domain. Residues Asp-7, Glu-45, Asp-71, and Asp-120 each coordinate Mg(2+).

The protein belongs to the RNase H family. EbsB subfamily. Requires Mg(2+) as cofactor.

The protein resides in the secreted. It is found in the cell wall. Seems to play some role in the cell surface expression of a chromosomally encoded receptor, named enterococcal binding substance (EBS), that mediates mating aggregate formation. Might interfere with the synthesis or assembly of EBS and function as a cell wall hydrolase. The polypeptide is Putative hydrolase EbsB (Enterococcus faecalis (strain ATCC 700802 / V583)).